Consider the following 389-residue polypeptide: Succinate--CoA ligase [ADP-forming] subunit beta (389 aa).

The ATP-grasp domain occupies 9 to 244 (KQLLAEYGIP…KTQEDETEVT (236 aa)). ATP is bound by residues Lys46, 53–55 (GRG), Gly102, and Glu107. Residues Asn199 and Asp213 each contribute to the Mg(2+) site. Residues Asn264 and 321–323 (GIV) contribute to the substrate site.

The protein belongs to the succinate/malate CoA ligase beta subunit family. Heterotetramer of two alpha and two beta subunits. It depends on Mg(2+) as a cofactor.

The catalysed reaction is succinate + ATP + CoA = succinyl-CoA + ADP + phosphate. The enzyme catalyses GTP + succinate + CoA = succinyl-CoA + GDP + phosphate. It functions in the pathway carbohydrate metabolism; tricarboxylic acid cycle; succinate from succinyl-CoA (ligase route): step 1/1. Succinyl-CoA synthetase functions in the citric acid cycle (TCA), coupling the hydrolysis of succinyl-CoA to the synthesis of either ATP or GTP and thus represents the only step of substrate-level phosphorylation in the TCA. The beta subunit provides nucleotide specificity of the enzyme and binds the substrate succinate, while the binding sites for coenzyme A and phosphate are found in the alpha subunit. The chain is Succinate--CoA ligase [ADP-forming] subunit beta from Xanthomonas oryzae pv. oryzae (strain MAFF 311018).